The primary structure comprises 245 residues: tRNA pseudouridine synthase A (245 aa).

Aspartate 52 (nucleophile) is an active-site residue. Tyrosine 112 is a binding site for substrate.

It belongs to the tRNA pseudouridine synthase TruA family. Homodimer.

The catalysed reaction is uridine(38/39/40) in tRNA = pseudouridine(38/39/40) in tRNA. Its function is as follows. Formation of pseudouridine at positions 38, 39 and 40 in the anticodon stem and loop of transfer RNAs. The sequence is that of tRNA pseudouridine synthase A from Dictyoglomus turgidum (strain DSM 6724 / Z-1310).